The chain runs to 131 residues: Glycine cleavage system H protein (131 aa).

In terms of domain architecture, Lipoyl-binding spans 24 to 106 (TLRVGITDYA…YGEGWLVDLQ (83 aa)). Lys-65 carries the post-translational modification N6-lipoyllysine.

The protein belongs to the GcvH family. As to quaternary structure, the glycine cleavage system is composed of four proteins: P, T, L and H. (R)-lipoate serves as cofactor.

The glycine cleavage system catalyzes the degradation of glycine. The H protein shuttles the methylamine group of glycine from the P protein to the T protein. In Mycobacterium sp. (strain JLS), this protein is Glycine cleavage system H protein.